A 599-amino-acid chain; its full sequence is Serine/threonine-protein kinase Nek1 (599 aa).

The Protein kinase domain occupies 4 to 258; that stretch reads YEVLEQIGKG…AAELLKHPHL (255 aa). ATP contacts are provided by residues 10–18 and Lys-33; that span reads IGKGAFGSA. Asp-129 (proton acceptor) is an active-site residue. Disordered stretches follow at residues 364–386, 461–482, and 504–542; these read SIVK…EPPK, SEDP…PQHC, and DDDD…DTSS. Positions 511–530 are enriched in low complexity; it reads DSSSGRNNAAAAASSRAGSS.

The protein belongs to the protein kinase superfamily. NEK Ser/Thr protein kinase family. NIMA subfamily. Expressed in anthers, pistils and leaves.

It carries out the reaction L-seryl-[protein] + ATP = O-phospho-L-seryl-[protein] + ADP + H(+). It catalyses the reaction L-threonyl-[protein] + ATP = O-phospho-L-threonyl-[protein] + ADP + H(+). Functionally, may be involved in plant development processes. In Oryza sativa subsp. japonica (Rice), this protein is Serine/threonine-protein kinase Nek1.